We begin with the raw amino-acid sequence, 130 residues long: Small ribosomal subunit protein uS8 (130 aa).

Belongs to the universal ribosomal protein uS8 family. In terms of assembly, part of the 30S ribosomal subunit.

Its function is as follows. One of the primary rRNA binding proteins, it binds directly to 16S rRNA central domain where it helps coordinate assembly of the platform of the 30S subunit. The chain is Small ribosomal subunit protein uS8 from Methanococcus maripaludis (strain C5 / ATCC BAA-1333).